The primary structure comprises 176 residues: Ribosome maturation factor RimM (176 aa).

One can recognise a PRC barrel domain in the interval 100 to 173 (KDEYHYHDLI…WLLINPPPGL (74 aa)).

This sequence belongs to the RimM family. In terms of assembly, binds ribosomal protein uS19.

The protein resides in the cytoplasm. In terms of biological role, an accessory protein needed during the final step in the assembly of 30S ribosomal subunit, possibly for assembly of the head region. Essential for efficient processing of 16S rRNA. May be needed both before and after RbfA during the maturation of 16S rRNA. It has affinity for free ribosomal 30S subunits but not for 70S ribosomes. This Prochlorococcus marinus (strain NATL1A) protein is Ribosome maturation factor RimM.